We begin with the raw amino-acid sequence, 104 residues long: Secreted RxLR effector protein 54 (104 aa).

Positions M1 to A19 are cleaved as a signal peptide. Residues R52 to R55 carry the RxLR motif. A glycan (N-linked (GlcNAc...) asparagine) is linked at N64.

Belongs to the RxLR effector family.

The protein localises to the secreted. The protein resides in the host chloroplast envelope. Its subcellular location is the host mitochondrion. It localises to the host nucleus. It is found in the host cytoplasm. Its function is as follows. Secreted effector that completely suppresses the host cell death induced by cell death-inducing proteins. This chain is Secreted RxLR effector protein 54, found in Plasmopara viticola (Downy mildew of grapevine).